The primary structure comprises 611 residues: Leukotriene A-4 hydrolase (611 aa).

Position 73 is an N6-acetyllysine (Lys-73). Residues 135 to 137 and 267 to 272 contribute to the a peptide site; these read QCQ and PYGGME. His-296 is a Zn(2+) binding site. Glu-297 functions as the Proton acceptor in the catalytic mechanism. His-300 and Glu-319 together coordinate Zn(2+). The residue at position 337 (Lys-337) is an N6-acetyllysine. Tyr-384 functions as the Proton donor in the catalytic mechanism. An N6-acetyllysine modification is found at Lys-414. Ser-416 bears the Phosphoserine mark. 564 to 566 contributes to the a peptide binding site; that stretch reads RMK. N6-acetyllysine is present on Lys-573.

This sequence belongs to the peptidase M1 family. As to quaternary structure, monomer. Zn(2+) serves as cofactor. Phosphorylation at Ser-416 inhibits leukotriene-A4 hydrolase activity. Isoform 1 and isoform 2 are expressed in monocytes, lymphocytes, neutrophils, reticulocytes, platelets and fibroblasts.

Its subcellular location is the cytoplasm. It catalyses the reaction leukotriene A4 + H2O = leukotriene B4. The enzyme catalyses (5S,6S)-epoxy-(18R)-hydroxy-(7E,9E,11Z,14Z,16E)-eicosapentaenoate + H2O = resolvin E1. It carries out the reaction (5S,6S)-epoxy-(18S)-hydroxy-(7E,9E,11Z,14Z,16E)-eicosapentaenoate + H2O = 18S-resolvin E1. The catalysed reaction is Release of the N-terminal residue from a tripeptide.. The protein operates within lipid metabolism; leukotriene B4 biosynthesis. With respect to regulation, inhibited by bestatin. The epoxide hydrolase activity is restrained by suicide inactivation that involves binding of LTA4 to Tyr-379. 4-(4-benzylphenyl)thiazol-2-amine (ARM1) selectively inhibits the epoxide hydrolase activity. In terms of biological role, bifunctional zinc metalloenzyme that comprises both epoxide hydrolase (EH) and aminopeptidase activities. Acts as an epoxide hydrolase to catalyze the conversion of LTA4 to the pro-inflammatory mediator leukotriene B4 (LTB4). Also has aminopeptidase activity, with high affinity for N-terminal arginines of various synthetic tripeptides. In addition to its pro-inflammatory EH activity, may also counteract inflammation by its aminopeptidase activity, which inactivates by cleavage another neutrophil attractant, the tripeptide Pro-Gly-Pro (PGP), a bioactive fragment of collagen generated by the action of matrix metalloproteinase-9 (MMP9) and prolylendopeptidase (PREPL). Involved also in the biosynthesis of resolvin E1 and 18S-resolvin E1 from eicosapentaenoic acid, two lipid mediators that show potent anti-inflammatory and pro-resolving actions. This is Leukotriene A-4 hydrolase (LTA4H) from Homo sapiens (Human).